We begin with the raw amino-acid sequence, 254 residues long: MVPWLGPDDPFPSIERALGPATGAPGLLAASADLLPSRLIDAYLRGIFPWYSDGQPVLWWSPDPRMILVPAEFKVSPSLRKTLKRVLREPDWEVRVDHDFPGVMRACAQAPRRGQRGTWITAEIIDAYTSLYRSGNAHSIETWHDGRRVGGLYGVSFGRMFFGESMYADVTDASKIALATLVAHLREQGLEMIDCQQNTSHLASLGGREIARKAFVAHVRSAVAEPPIPWQFDKRVLAALTSPAETAAPSGTER.

This sequence belongs to the L/F-transferase family.

The protein localises to the cytoplasm. It catalyses the reaction N-terminal L-lysyl-[protein] + L-leucyl-tRNA(Leu) = N-terminal L-leucyl-L-lysyl-[protein] + tRNA(Leu) + H(+). The catalysed reaction is N-terminal L-arginyl-[protein] + L-leucyl-tRNA(Leu) = N-terminal L-leucyl-L-arginyl-[protein] + tRNA(Leu) + H(+). The enzyme catalyses L-phenylalanyl-tRNA(Phe) + an N-terminal L-alpha-aminoacyl-[protein] = an N-terminal L-phenylalanyl-L-alpha-aminoacyl-[protein] + tRNA(Phe). In terms of biological role, functions in the N-end rule pathway of protein degradation where it conjugates Leu, Phe and, less efficiently, Met from aminoacyl-tRNAs to the N-termini of proteins containing an N-terminal arginine or lysine. This is Leucyl/phenylalanyl-tRNA--protein transferase from Burkholderia cenocepacia (strain ATCC BAA-245 / DSM 16553 / LMG 16656 / NCTC 13227 / J2315 / CF5610) (Burkholderia cepacia (strain J2315)).